The sequence spans 587 residues: Putative inactive receptor-like protein kinase At1g64210 (587 aa).

An N-terminal signal peptide occupies residues 1-19 (MQIFLFFFSLILCFVLISS). Residues 20–232 (QTLEDDKKAL…KTPFGLSQLA (213 aa)) lie on the Extracellular side of the membrane. Residues Asn-37 and Asn-44 are each glycosylated (N-linked (GlcNAc...) asparagine). 5 LRR repeats span residues 89–112 (SLKFLSLRKNHFTGDFPSDFTNLK), 113–136 (SLTHLYLQHNHLSGPLLAIFSELK), 137–160 (NLKVLDLSNNGFNGSIPTSLSGLT), 161–183 (SLQVLNLANNSFSGEIPNLHLPK), and 184–205 (LSQINLSNNKLIGTIPKSLQRF). N-linked (GlcNAc...) asparagine glycans are attached at residues Asn-149, Asn-169, Asn-188, and Asn-214. Residues 233 to 253 (FLLILSAACVLCVSGLSFIMI) traverse the membrane as a helical segment. The Cytoplasmic portion of the chain corresponds to 254–587 (TCFGKTRISG…IEDIRSVDAE (334 aa)). The Protein kinase domain maps to 307–581 (SSSAEVLGKG…AQVLKLIEDI (275 aa)). Ser-309 carries the phosphoserine modification. ATP contacts are provided by residues 313-321 (LGKGAFGTT) and Lys-335. Ser-386 is subject to Phosphoserine. A phosphothreonine mark is found at Thr-462, Thr-463, Thr-466, and Thr-477.

It is found in the cell membrane. This chain is Putative inactive receptor-like protein kinase At1g64210, found in Arabidopsis thaliana (Mouse-ear cress).